Here is a 1207-residue protein sequence, read N- to C-terminus: Systemin receptor SR160 (1207 aa).

An N-terminal signal peptide occupies residues 1 to 34; it reads MKAHKTVFNQHPLSLNKLFFVLLLIFFLPPASPA. A Cys pair 1 motif is present at residues 71 to 78; that stretch reads CSFTGVSC. LRR repeat units follow at residues 109 to 131, 135 to 157, 161 to 181, 186 to 207, 213 to 234, 235 to 257, 258 to 280, 282 to 304, 305 to 325, 329 to 350, 353 to 375, 378 to 401, 402 to 423, 428 to 450, 452 to 474, 476 to 499, 500 to 523, 524 to 547, 548 to 570, and 572 to 594; these read NLES…AKSQ, TLDS…SSFG, NLKS…EMLK, SLQV…PWVS, ELEF…LDFK, NLSY…KDCS, NLQH…LSSC, KLSF…PSES, LQYL…QLAD, TVVE…SLGE, SLEL…TLLK, NIKT…SNLP, KLET…GICK, NLKV…LSNC, QLVS…LGSL, KLKD…MYLQ, ALEN…SNCT, KLNW…GRLS, NLAI…LGNC, and SLIW…LFKQ. N-linked (GlcNAc...) asparagine glycosylation occurs at Asn-119. Asn-166 and Asn-196 each carry an N-linked (GlcNAc...) asparagine glycan. 2 N-linked (GlcNAc...) asparagine glycosylation sites follow: Asn-235 and Asn-245. The N-linked (GlcNAc...) asparagine glycan is linked to Asn-287. N-linked (GlcNAc...) asparagine glycans are attached at residues Asn-339 and Asn-363. Asn-412 and Asn-449 each carry an N-linked (GlcNAc...) asparagine glycan. Residue Asn-521 is glycosylated (N-linked (GlcNAc...) asparagine). Asn-556, Asn-584, Asn-646, and Asn-662 each carry an N-linked (GlcNAc...) asparagine glycan. LRR repeat units lie at residues 664–686, 688–711, 712–735, and 736–758; these read SMIF…LGAM, YLSI…GGLK, NVAI…TSLT, and LLGE…APFD. N-linked (GlcNAc...) asparagine glycans are attached at residues Asn-724, Asn-746, and Asn-767. The Cys pair 2 motif lies at 771–779; it reads CGYPLPLPC. A helical transmembrane segment spans residues 803 to 823; the sequence is SVAMGLLFSLFCIFGLIIVAI. One can recognise a Protein kinase domain in the interval 888-1163; that stretch reads FHNDSLVGSG…IQVMAMFKEI (276 aa). Residues 894-902 and Lys-916 contribute to the ATP site; that span reads VGSGGFGDV. Residue Asp-1014 is the Proton acceptor of the active site.

Belongs to the protein kinase superfamily. Ser/Thr protein kinase family. Glycosylated.

It localises to the cell membrane. The catalysed reaction is L-seryl-[protein] + ATP = O-phospho-L-seryl-[protein] + ADP + H(+). The enzyme catalyses L-threonyl-[protein] + ATP = O-phospho-L-threonyl-[protein] + ADP + H(+). Functionally, receptor with a serine/threonine-protein kinase activity. Involved in the perception of systemin, a peptide hormone responsible for the systemic activation of defense genes in leaves of wounded plants. May also regulate, in response to brassinosteroid binding, a signaling cascade involved in plant development. The protein is Systemin receptor SR160 of Solanum peruvianum (Peruvian tomato).